The chain runs to 96 residues: MGFSSIWHWIIVLVVVLLLFGAGKIPRLMGDVAKGVKAFKKGMADDEDDEAASVSAERRGIEDGKPAQTIYPPQQPQQPQQPPQQPPVHRDDAPRG.

Residues 1-21 (MGFSSIWHWIIVLVVVLLLFG) traverse the membrane as a helical segment. A disordered region spans residues 42–96 (GMADDEDDEAASVSAERRGIEDGKPAQTIYPPQQPQQPQQPPQQPPVHRDDAPRG). Positions 56-65 (AERRGIEDGK) are enriched in basic and acidic residues. The segment covering 73-86 (PQQPQQPQQPPQQP) has biased composition (pro residues).

Belongs to the TatA/E family. The Tat system comprises two distinct complexes: a TatABC complex, containing multiple copies of TatA, TatB and TatC subunits, and a separate TatA complex, containing only TatA subunits. Substrates initially bind to the TatABC complex, which probably triggers association of the separate TatA complex to form the active translocon.

Its subcellular location is the cell inner membrane. Its function is as follows. Part of the twin-arginine translocation (Tat) system that transports large folded proteins containing a characteristic twin-arginine motif in their signal peptide across membranes. TatA could form the protein-conducting channel of the Tat system. In Rhodospirillum rubrum (strain ATCC 11170 / ATH 1.1.1 / DSM 467 / LMG 4362 / NCIMB 8255 / S1), this protein is Sec-independent protein translocase protein TatA.